Consider the following 501-residue polypeptide: MVTSRADEISQIIRKRIEQYNTEVKIVNTGTVLQVGDGIARIYGLDDVMAGELVEFKEGTVGIALNLESKNVGVVLMGDGLMIQEGSSVKATGRIAQIPVSEGYLGRVVNALAKPIDGRGEISTSESRLIESPAPGIISRRSVYEPLQTGLIAIDSMIPIGRGQRELIIGDRQTGKTAVATDTILNQQGQNLVCVYVAIGQKASSVAQVVTTLQERGAMEYTIVVAETADSPATLQYLAPYTGAALAEYFMYRERHTLIIYDDPSKHAQAYRQMSLLLRRPPGREAYPGDVFYLHSRLLERVAKLSSQLGEGSMTALPIVETQSGDVSAYIPTNVISITDGQIFLSADLFNAGIRPAINVGISVSRVGSAAQIKAMKQVAGKLKLELAQFAELEAFAQFASDLDKATQNQLARGQRLRELLKQSQSAPLTVEEQIITIYTGTNSYLDSVEIAQVRKFIVELRAYLKTKKPKFNEIISSTKTFTGEAEAILKEAIQEQMELF.

170 to 177 (GDRQTGKT) is a binding site for ATP.

It belongs to the ATPase alpha/beta chains family. As to quaternary structure, F-type ATPases have 2 components, CF(1) - the catalytic core - and CF(0) - the membrane proton channel. CF(1) has five subunits: alpha(3), beta(3), gamma(1), delta(1), epsilon(1). CF(0) has four main subunits: a, b, b' and c.

Its subcellular location is the plastid. It localises to the chloroplast thylakoid membrane. The catalysed reaction is ATP + H2O + 4 H(+)(in) = ADP + phosphate + 5 H(+)(out). Its function is as follows. Produces ATP from ADP in the presence of a proton gradient across the membrane. The alpha chain is a regulatory subunit. This Pisum sativum (Garden pea) protein is ATP synthase subunit alpha, chloroplastic.